The primary structure comprises 481 residues: MSYIKKLRARLDSGEISAVELTKEYLAKIKEQDKRINSVITLCEAEALKEAEDADAIISAGKQGLLTGIPILHKDLFCTKGIRTTAASKMLDNFVAPYDSTVTKNCKDQGMVTLGKLNMDEFAMGSTNEYSYYGAVSNPWDLERVPGGSSGGSAAAVAAGFAPISTGSDTGGSVRQPASFCGLTAMKPSYGSTSRFGMVAFASSFDQAGVLGHYAEDVAIMLDAIAGECEFDSTCVGVKQNHFTQDLEKDISGKVIGVDESLIKDLPAQIQEAVSKTLDNFKKLGAEIKSVKVPDLKEALSTYYIITPAEAAANLARYDGIRYGYRNPEARDLDELYRKSRTDGFGAEVKRRIMIGNYVLASSQYDSYYNKAQQLRKVMTDQINQIFTQVDAIFMPASPSEAFKKGDKLDPVSAYLSDIYTIPANISGLPAIAFPIGFANNLPVGGQLMAKAFNDNILTQMVVQYQKHYGIEEFILQQARI.

Active-site charge relay system residues include Lys-74 and Ser-149. Ser-173 serves as the catalytic Acyl-ester intermediate.

Belongs to the amidase family. GatA subfamily. As to quaternary structure, heterotrimer of A, B and C subunits.

It carries out the reaction L-glutamyl-tRNA(Gln) + L-glutamine + ATP + H2O = L-glutaminyl-tRNA(Gln) + L-glutamate + ADP + phosphate + H(+). Functionally, allows the formation of correctly charged Gln-tRNA(Gln) through the transamidation of misacylated Glu-tRNA(Gln) in organisms which lack glutaminyl-tRNA synthetase. The reaction takes place in the presence of glutamine and ATP through an activated gamma-phospho-Glu-tRNA(Gln). In Francisella tularensis subsp. tularensis (strain FSC 198), this protein is Glutamyl-tRNA(Gln) amidotransferase subunit A.